A 544-amino-acid chain; its full sequence is Rubrofusarin-specific efflux pump aurT (544 aa).

Basic and acidic residues predominate over residues 1–12 (MTDNTDMEKLDR). Positions 1 to 42 (MTDNTDMEKLDRATTPTPIPNEAPPTSEPSESKPEEAEDESK) are disordered. The segment covering 17-27 (TPIPNEAPPTS) has biased composition (pro residues). The span at 30–42 (SESKPEEAEDESK) shows a compositional bias: basic and acidic residues. Helical transmembrane passes span 45–65 (HGLKLAAIILSNMVAMFLVAL), 89–111 (WYASAYLITSSATQLLWGRIFTF), 116–136 (TVYLVAIFFFELGSLLCGVAP), 146–166 (AIAGAGSAGIYSGSTILITTV), 177–197 (GMMGAVFGIASVIAPLIGGAF), 205–225 (WCFYINLPVGGAAVACLILLF), 246–266 (WGNLVFLPGVICLILALQWGG), and 276–296 (IVALLVLACVLLLVFIGIQIW). The N-linked (GlcNAc...) asparagine glycan is linked to Asn300. Helical transmembrane passes span 318–338 (IFAFCLGSVLIVFLIALPIWF), 357–377 (VLSLVFGAIVSGGVINGVGWF), 380–400 (VFFSSVIFMSVGGGLITTFVV), 407–427 (WIGYQIILGLGIGQGMQLASL), 444–464 (LMFFAQSLGGSVLVCVAQAVF), and 514–534 (YFYVGLAAACFAVLPSLGIEW).

The protein belongs to the major facilitator superfamily. TCR/Tet family.

It localises to the cell membrane. Its pathway is pigment biosynthesis. Functionally, rubrofusarin-specific efflux pump; part of the gene cluster that mediates the biosynthesis of aurofusarin, a red mycelium pigment which is acting as a mycotoxin. The first step is performed by the polyketide synthase which condenses one acetyl-CoA and 6 malonyl-CoA units to form the first intermediate, the cyclic heptaketide and yellow pigment YWA1. The C2 hydroxyl group in the pyrone ring of YWA1 is probably formed during ring closure by an aldol-type cyclization reaction. The dehydratase aurZ then acts as the first tailoring enzyme in the aurofusarin biosynthetic pathway by converting YWA1 to nor-rubrofusarin. Nor-rubrofusarin is then methylated to rubrofusarin by the O-methyltransferase aurJ. Rubrofusarin is then transported across the plasma membrane by the rubrofusarin-specific pump aurT for further enzymatic processing by the extracellular complex composed of GIP1, aurF, aurO and aurS to yield aurofusarin. The sequence is that of Rubrofusarin-specific efflux pump aurT from Gibberella zeae (strain ATCC MYA-4620 / CBS 123657 / FGSC 9075 / NRRL 31084 / PH-1) (Wheat head blight fungus).